A 1984-amino-acid chain; its full sequence is Spermatogenesis-associated protein 31H1 (1984 aa).

Disordered stretches follow at residues 448–467, 1045–1067, 1181–1287, 1326–1346, and 1439–1984; these read MGLTKSKNQSMKSPGTTPGP, PMEESEDSQSDSQTRISESQHSL, YRER…SDSK, RIGATQTSTASLKRQPKKPSQ, and QQPR…EATR. Polar residues-rich tracts occupy residues 450–463, 1058–1067, and 1205–1226; these read LTKSKNQSMKSPGT, TRISESQHSL, and TQASKSPTSTIDLQSGPSQSPA. Basic and acidic residues predominate over residues 1238–1247; sequence SRPDLVEKTK. 2 stretches are compositionally biased toward polar residues: residues 1458 to 1471 and 1492 to 1508; these read TDSQSGIAFQTASV and RNETSSQESKNLSTPGT. 2 stretches are compositionally biased toward basic and acidic residues: residues 1532 to 1558 and 1568 to 1579; these read DKLTHKEHNHPSFYRERTPRGPSERTR and SPSERSQRSSLE. 3 consecutive repeat copies span residues 1593–1600, 1601–1608, and 1609–1616. The tract at residues 1593–1935 is 27 X 8 AA approximate tandem repeat of P-S-E-R-S-H-H-S; the sequence is PSRKNHSSPS…CSPSERSRRS (343 aa). Over residues 1599–1610 the composition is skewed to low complexity; that stretch reads SSPSERSWRSPS. The segment covering 1620–1630 has biased composition (basic and acidic residues); it reads RSCHSLSERGL. Residues 1636 to 1647 are compositionally biased toward basic residues; that stretch reads RSHRGPSQRRHH. A run of 3 repeats spans residues 1641–1648, 1649–1656, and 1657–1664. Over residues 1648 to 1667 the composition is skewed to basic and acidic residues; it reads SPSERSHRSPSERSHRSSSE. A compositionally biased stretch (basic residues) spans 1668-1679; sequence RRHRSPSQRSHR. A compositionally biased stretch (basic and acidic residues) spans 1680–1691; that stretch reads GPSERSHCSPSE. 19 repeat units span residues 1681–1688, 1689–1696, 1697–1704, 1705–1712, 1713–1720, 1721–1728, 1729–1736, 1737–1744, 1745–1752, 1753–1760, 1761–1768, 1769–1776, 1777–1784, 1785–1792, 1793–1800, 1801–1808, 1848–1855, 1864–1871, and 1880–1887. Over residues 1692 to 1727 the composition is skewed to basic residues; the sequence is RRHRSPSQRSHRGPSERRHHSPSKRSHRSPARRSHR. Residues 1728–1869 show a composition bias toward basic and acidic residues; the sequence is SPSERSHHSP…SRCSPSERRG (142 aa). Basic and acidic residues-rich tracts occupy residues 1895 to 1917, 1928 to 1941, and 1949 to 1959; these read RTSERSHRSSCERTRHSPSEMRP, PSERSRRSPLKEGL, and RPSHSLSRDFK. Repeat copies occupy residues 1921 to 1928 and 1929 to 1935. The segment covering 1960–1969 has biased composition (polar residues); the sequence is NQTTLLGTTH.

In terms of tissue distribution, expressed in sperm (at protein level).

The polypeptide is Spermatogenesis-associated protein 31H1 (Homo sapiens (Human)).